We begin with the raw amino-acid sequence, 194 residues long: Fe/S biogenesis protein NfuA (194 aa).

Cys152 and Cys155 together coordinate [4Fe-4S] cluster.

This sequence belongs to the NfuA family. As to quaternary structure, homodimer. [4Fe-4S] cluster is required as a cofactor.

Its function is as follows. Involved in iron-sulfur cluster biogenesis. Binds a 4Fe-4S cluster, can transfer this cluster to apoproteins, and thereby intervenes in the maturation of Fe/S proteins. Could also act as a scaffold/chaperone for damaged Fe/S proteins. In Pseudomonas putida (strain ATCC 700007 / DSM 6899 / JCM 31910 / BCRC 17059 / LMG 24140 / F1), this protein is Fe/S biogenesis protein NfuA.